The following is a 466-amino-acid chain: Asparagine--tRNA ligase (466 aa).

The protein belongs to the class-II aminoacyl-tRNA synthetase family. Homodimer.

It localises to the cytoplasm. It catalyses the reaction tRNA(Asn) + L-asparagine + ATP = L-asparaginyl-tRNA(Asn) + AMP + diphosphate + H(+). In Colwellia psychrerythraea (strain 34H / ATCC BAA-681) (Vibrio psychroerythus), this protein is Asparagine--tRNA ligase.